A 441-amino-acid chain; its full sequence is Homoserine dehydrogenase (441 aa).

NADP(+) is bound by residues N17 and V18. V18, V37, and G47 together coordinate NAD(+). V18 serves as a coordination point for NADPH. The NADP(+) site is built by R49, R50, and K107. R49 is a binding site for NADPH. K107 provides a ligand contact to NADPH. 4 residues coordinate Na(+): E131, V134, G136, and I138. Residues G189 and E192 each contribute to the NADP(+) site. 2 residues coordinate L-homoserine: E192 and D203. Residue K207 is the Proton donor of the active site. Residue G309 participates in NADP(+) binding. G309 contacts NAD(+). An NADPH-binding site is contributed by G309. The ACT domain maps to Y356–R435.

It belongs to the homoserine dehydrogenase family. A metal cation serves as cofactor.

It catalyses the reaction L-homoserine + NADP(+) = L-aspartate 4-semialdehyde + NADPH + H(+). It carries out the reaction L-homoserine + NAD(+) = L-aspartate 4-semialdehyde + NADH + H(+). It functions in the pathway amino-acid biosynthesis; L-methionine biosynthesis via de novo pathway; L-homoserine from L-aspartate: step 3/3. It participates in amino-acid biosynthesis; L-threonine biosynthesis; L-threonine from L-aspartate: step 3/5. Its function is as follows. Catalyzes the conversion of L-aspartate-beta-semialdehyde (L-Asa) to L-homoserine (L-Hse), the third step in the biosynthesis of threonine and methionine from aspartate. This is Homoserine dehydrogenase (hom) from Mycobacterium tuberculosis (strain CDC 1551 / Oshkosh).